The primary structure comprises 1114 residues: Hephaestin-like protein (1114 aa).

Residues 1–26 form the signal peptide; it reads MMDRSNAAFVLTACFIFSQLICHVAA. Plastocyanin-like domains follow at residues 27 to 210, 218 to 365, 380 to 562, 572 to 719, 730 to 915, and 924 to 1114; these read ITRT…LICR, QQSG…VTKC, KRTY…LLTC, TRKD…VNTC, KTRD…LIIC, and TEER…LLKA. Residues 27 to 1091 are Extracellular-facing; it reads ITRTYYIAAV…KTTPKPITAA (1065 aa). An N-linked (GlcNAc...) asparagine glycan is attached at N121. Cu cation is bound by residues H129, H131, H189, and H191. A disulfide bridge links C183 with C209. N-linked (GlcNAc...) asparagine glycosylation occurs at N236. A disulfide bridge links C284 with C365. Cu cation contacts are provided by H303, C346, and H351. N-linked (GlcNAc...) asparagine glycosylation is found at N361, N478, and N489. 2 disulfide bridges follow: C536–C562 and C638–C719. Cu cation-binding residues include H657, C700, H705, and M710. N-linked (GlcNAc...) asparagine glycosylation occurs at N831. C889 and C915 are joined by a disulfide. A glycan (N-linked (GlcNAc...) asparagine) is linked at N944. Cu cation contacts are provided by H1014, H1017, H1019, H1059, C1060, H1061, H1065, and M1070. Residues 1092-1112 form a helical membrane-spanning segment; it reads SSFVTSSIFIYLSFPVLAMLL. Topologically, residues 1113–1114 are cytoplasmic; sequence KA.

The protein belongs to the multicopper oxidase family. The cofactor is Cu cation. In terms of tissue distribution, component of the acid-insoluble and acid-soluble organic matrix of the aragonitic skeleton (at protein level).

Its subcellular location is the membrane. Its function is as follows. May function as a ferroxidase and may be involved in copper transport and homeostasis. The protein is Hephaestin-like protein of Acropora millepora (Staghorn coral).